Consider the following 500-residue polypeptide: Cytochrome P450 71D7 (500 aa).

C441 lines the heme pocket.

It belongs to the cytochrome P450 family. Requires heme as cofactor.

This chain is Cytochrome P450 71D7 (CYP71D7), found in Solanum chacoense (Chaco potato).